A 286-amino-acid chain; its full sequence is Bifunctional protein FolD (286 aa).

Residues 165–167 and S190 each bind NADP(+); that span reads GRS.

It belongs to the tetrahydrofolate dehydrogenase/cyclohydrolase family. Homodimer.

It carries out the reaction (6R)-5,10-methylene-5,6,7,8-tetrahydrofolate + NADP(+) = (6R)-5,10-methenyltetrahydrofolate + NADPH. The enzyme catalyses (6R)-5,10-methenyltetrahydrofolate + H2O = (6R)-10-formyltetrahydrofolate + H(+). It participates in one-carbon metabolism; tetrahydrofolate interconversion. Its function is as follows. Catalyzes the oxidation of 5,10-methylenetetrahydrofolate to 5,10-methenyltetrahydrofolate and then the hydrolysis of 5,10-methenyltetrahydrofolate to 10-formyltetrahydrofolate. In Paraburkholderia xenovorans (strain LB400), this protein is Bifunctional protein FolD.